Reading from the N-terminus, the 216-residue chain is Probable transaldolase (216 aa).

Lysine 83 functions as the Schiff-base intermediate with substrate in the catalytic mechanism.

Belongs to the transaldolase family. Type 3B subfamily.

The protein resides in the cytoplasm. The catalysed reaction is D-sedoheptulose 7-phosphate + D-glyceraldehyde 3-phosphate = D-erythrose 4-phosphate + beta-D-fructose 6-phosphate. Its pathway is carbohydrate degradation; pentose phosphate pathway; D-glyceraldehyde 3-phosphate and beta-D-fructose 6-phosphate from D-ribose 5-phosphate and D-xylulose 5-phosphate (non-oxidative stage): step 2/3. Its function is as follows. Transaldolase is important for the balance of metabolites in the pentose-phosphate pathway. This is Probable transaldolase from Sphingopyxis alaskensis (strain DSM 13593 / LMG 18877 / RB2256) (Sphingomonas alaskensis).